The sequence spans 356 residues: Probable dual-specificity RNA methyltransferase RlmN (356 aa).

Glu-92 acts as the Proton acceptor in catalysis. A Radical SAM core domain is found at His-98 to Asp-336. Cys-105 and Cys-341 are joined by a disulfide. Residues Cys-112, Cys-116, and Cys-119 each contribute to the [4Fe-4S] cluster site. Residues Gly-164–Glu-165, Ser-196, Ser-219–His-221, and Asn-297 contribute to the S-adenosyl-L-methionine site. Cys-341 serves as the catalytic S-methylcysteine intermediate.

Belongs to the radical SAM superfamily. RlmN family. [4Fe-4S] cluster is required as a cofactor.

The protein resides in the cytoplasm. It carries out the reaction adenosine(2503) in 23S rRNA + 2 reduced [2Fe-2S]-[ferredoxin] + 2 S-adenosyl-L-methionine = 2-methyladenosine(2503) in 23S rRNA + 5'-deoxyadenosine + L-methionine + 2 oxidized [2Fe-2S]-[ferredoxin] + S-adenosyl-L-homocysteine. The catalysed reaction is adenosine(37) in tRNA + 2 reduced [2Fe-2S]-[ferredoxin] + 2 S-adenosyl-L-methionine = 2-methyladenosine(37) in tRNA + 5'-deoxyadenosine + L-methionine + 2 oxidized [2Fe-2S]-[ferredoxin] + S-adenosyl-L-homocysteine. Functionally, specifically methylates position 2 of adenine 2503 in 23S rRNA and position 2 of adenine 37 in tRNAs. In Shouchella clausii (strain KSM-K16) (Alkalihalobacillus clausii), this protein is Probable dual-specificity RNA methyltransferase RlmN.